The chain runs to 671 residues: Probable serine/threonine-protein kinase DDB_G0286627 (671 aa).

The 253-residue stretch at 31–283 folds into the Protein kinase domain; that stretch reads WVIERQLSKG…SHQLIKHPFF (253 aa). ATP-binding positions include 37-45 and lysine 61; that span reads LSKGSFGQV. The active-site Proton acceptor is the aspartate 148. A helical membrane pass occupies residues 369–389; sequence FKIIYLFLILLFLMTILVNLN. A disordered region spans residues 410 to 523; it reads PESNPIKKPS…PPVTETPKPT (114 aa). Low complexity predominate over residues 427 to 490; that stretch reads NQYSEGSQSS…PTDSSTTDPP (64 aa). A compositionally biased stretch (pro residues) spans 491–513; the sequence is VTDPPITDPPITDPPVTDPPITE.

This sequence belongs to the protein kinase superfamily. STE Ser/Thr protein kinase family. The cofactor is Mg(2+).

Its subcellular location is the membrane. The enzyme catalyses L-seryl-[protein] + ATP = O-phospho-L-seryl-[protein] + ADP + H(+). The catalysed reaction is L-threonyl-[protein] + ATP = O-phospho-L-threonyl-[protein] + ADP + H(+). The sequence is that of Probable serine/threonine-protein kinase DDB_G0286627 from Dictyostelium discoideum (Social amoeba).